Consider the following 353-residue polypeptide: Farnesyl pyrophosphate synthase (353 aa).

Isopentenyl diphosphate-binding residues include Lys57, Arg60, and Gln96. Lys57 carries the N6-(2-hydroxyisobutyryl)lysine; alternate modification. An N6-acetyllysine; alternate modification is found at Lys57. Residues Asp103 and Asp107 each contribute to the Mg(2+) site. Dimethylallyl diphosphate is bound at residue Arg112. Arg113 is an isopentenyl diphosphate binding site. Lys200, Thr201, Gln240, Lys257, and Lys266 together coordinate dimethylallyl diphosphate.

The protein belongs to the FPP/GGPP synthase family. Homodimer. Interacts with RSAD2. Requires Mg(2+) as cofactor.

Its subcellular location is the cytoplasm. The catalysed reaction is isopentenyl diphosphate + dimethylallyl diphosphate = (2E)-geranyl diphosphate + diphosphate. The enzyme catalyses isopentenyl diphosphate + (2E)-geranyl diphosphate = (2E,6E)-farnesyl diphosphate + diphosphate. Its pathway is isoprenoid biosynthesis; farnesyl diphosphate biosynthesis; farnesyl diphosphate from geranyl diphosphate and isopentenyl diphosphate: step 1/1. It functions in the pathway isoprenoid biosynthesis; geranyl diphosphate biosynthesis; geranyl diphosphate from dimethylallyl diphosphate and isopentenyl diphosphate: step 1/1. Inactivated by interferon-induced RSAD2. This inactivation may result of disruption of lipid rafts at the plasma membrane, and thus have an antiviral effect since many enveloped viruses need lipid rafts to bud efficiently out of the cell. Functionally, key enzyme in isoprenoid biosynthesis which catalyzes the formation of farnesyl diphosphate (FPP), a precursor for several classes of essential metabolites including sterols, dolichols, carotenoids, and ubiquinones. FPP also serves as substrate for protein farnesylation and geranylgeranylation. Catalyzes the sequential condensation of isopentenyl pyrophosphate with the allylic pyrophosphates, dimethylallyl pyrophosphate, and then with the resultant geranylpyrophosphate to the ultimate product farnesyl pyrophosphate. This is Farnesyl pyrophosphate synthase (Fdps) from Mus musculus (Mouse).